Here is a 374-residue protein sequence, read N- to C-terminus: Tetraacyldisaccharide 4'-kinase (374 aa).

ATP is bound at residue 59-66; the sequence is TAGGTGKT.

The protein belongs to the LpxK family.

It carries out the reaction a lipid A disaccharide + ATP = a lipid IVA + ADP + H(+). Its pathway is glycolipid biosynthesis; lipid IV(A) biosynthesis; lipid IV(A) from (3R)-3-hydroxytetradecanoyl-[acyl-carrier-protein] and UDP-N-acetyl-alpha-D-glucosamine: step 6/6. Functionally, transfers the gamma-phosphate of ATP to the 4'-position of a tetraacyldisaccharide 1-phosphate intermediate (termed DS-1-P) to form tetraacyldisaccharide 1,4'-bis-phosphate (lipid IVA). This chain is Tetraacyldisaccharide 4'-kinase, found in Elusimicrobium minutum (strain Pei191).